The chain runs to 217 residues: Adenylate kinase (217 aa).

10-15 (GAGKGT) lines the ATP pocket. The interval 30 to 59 (STGDMLRAAVKAGTEMGLAAKKVMDAGGLV) is NMP. AMP is bound by residues Thr31, Arg36, 57–59 (GLV), 85–88 (GFPR), and Gln92. An LID region spans residues 122–159 (GRRSHPASGRTYHVKFNPPKVDGVDDVTGEPLVQRDDD). Residues Arg123 and 132 to 133 (TY) each bind ATP. The AMP site is built by Arg156 and Arg167. Gly203 serves as a coordination point for ATP.

Belongs to the adenylate kinase family. Monomer.

The protein localises to the cytoplasm. It carries out the reaction AMP + ATP = 2 ADP. The protein operates within purine metabolism; AMP biosynthesis via salvage pathway; AMP from ADP: step 1/1. In terms of biological role, catalyzes the reversible transfer of the terminal phosphate group between ATP and AMP. Plays an important role in cellular energy homeostasis and in adenine nucleotide metabolism. In Leptothrix cholodnii (strain ATCC 51168 / LMG 8142 / SP-6) (Leptothrix discophora (strain SP-6)), this protein is Adenylate kinase.